The chain runs to 146 residues: COP9 signalosome complex subunit 9 (146 aa).

The 107-residue stretch at 1-107 folds into the PCI domain; that stretch reads MDSYKTQWLT…SVAREVKVLQ (107 aa).

In terms of assembly, component of a COP9 signalosome-like (CSN) complex.

The protein resides in the cytoplasm. It localises to the nucleus. Functionally, component of the COP9 signalosome (CSN) complex that acts as a regulator of the ubiquitin (Ubl) conjugation pathway by mediating the deneddylation of the cullin subunit of SCF-type E3 ubiquitin-protein ligase complexes. The CSN complex is involved in the regulation of the mating pheromone response. The sequence is that of COP9 signalosome complex subunit 9 (CSN9) from Candida glabrata (strain ATCC 2001 / BCRC 20586 / JCM 3761 / NBRC 0622 / NRRL Y-65 / CBS 138) (Yeast).